A 288-amino-acid chain; its full sequence is Probable ketoamine kinase PM0587 (288 aa).

ATP is bound at residue 92-94; the sequence is EAL.

The protein belongs to the fructosamine kinase family.

In terms of biological role, ketoamine kinase that phosphorylates ketoamines on the third carbon of the sugar moiety to generate ketoamine 3-phosphate. The chain is Probable ketoamine kinase PM0587 from Pasteurella multocida (strain Pm70).